Consider the following 102-residue polypeptide: Large ribosomal subunit protein eL31 (102 aa).

Belongs to the eukaryotic ribosomal protein eL31 family.

This is Large ribosomal subunit protein eL31 from Staphylothermus marinus (strain ATCC 43588 / DSM 3639 / JCM 9404 / F1).